Reading from the N-terminus, the 652-residue chain is 2',3'-cyclic-nucleotide 2'-phosphodiesterase/3'-nucleotidase (652 aa).

Positions 1-24 are cleaved as a signal peptide; it reads MFKRPLTLSLLASLIALTTSTAQA. A divalent metal cation is bound by residues Asp-36, His-38, Asp-81, Asn-121, His-230, His-262, and His-264. Substrate is bound by residues Tyr-445 and 549–555; that span reads YRAYSGK.

It belongs to the 5'-nucleotidase family. It depends on a divalent metal cation as a cofactor.

Its subcellular location is the periplasm. It carries out the reaction a nucleoside 2',3'-cyclic phosphate + H2O = a nucleoside 3'-phosphate + H(+). The enzyme catalyses a ribonucleoside 3'-phosphate + H2O = a ribonucleoside + phosphate. In terms of biological role, this bifunctional enzyme catalyzes two consecutive reactions during ribonucleic acid degradation. Converts a 2',3'-cyclic nucleotide to a 3'-nucleotide and then the 3'-nucleotide to the corresponding nucleoside and phosphate. The polypeptide is 2',3'-cyclic-nucleotide 2'-phosphodiesterase/3'-nucleotidase (cpdB) (Yersinia enterocolitica).